Here is a 240-residue protein sequence, read N- to C-terminus: Putative F-box/kelch-repeat protein At2g29860 (240 aa).

The segment at 1 to 20 is disordered; sequence MVLLSEIPGGSNGDDPNMNP. One can recognise an F-box domain in the interval 17–63; the sequence is NMNPQELPEELIESIVAPIPRCYYPSLSLLSRAFRHVITSQQLFVTR. 2 Kelch repeats span residues 120–165 and 167–212; these read KIYV…VIDG and IYVI…VTYA.

In Arabidopsis thaliana (Mouse-ear cress), this protein is Putative F-box/kelch-repeat protein At2g29860.